The chain runs to 180 residues: NAD(P)H-quinone oxidoreductase subunit I, chloroplastic (180 aa).

4Fe-4S ferredoxin-type domains lie at 55–84 (GRIH…VDWR) and 95–124 (LNYS…MTEE). [4Fe-4S] cluster is bound by residues Cys-64, Cys-67, Cys-70, Cys-74, Cys-104, Cys-107, Cys-110, and Cys-114.

It belongs to the complex I 23 kDa subunit family. NDH is composed of at least 16 different subunits, 5 of which are encoded in the nucleus. [4Fe-4S] cluster is required as a cofactor.

The protein localises to the plastid. It localises to the chloroplast thylakoid membrane. The enzyme catalyses a plastoquinone + NADH + (n+1) H(+)(in) = a plastoquinol + NAD(+) + n H(+)(out). The catalysed reaction is a plastoquinone + NADPH + (n+1) H(+)(in) = a plastoquinol + NADP(+) + n H(+)(out). NDH shuttles electrons from NAD(P)H:plastoquinone, via FMN and iron-sulfur (Fe-S) centers, to quinones in the photosynthetic chain and possibly in a chloroplast respiratory chain. The immediate electron acceptor for the enzyme in this species is believed to be plastoquinone. Couples the redox reaction to proton translocation, and thus conserves the redox energy in a proton gradient. The sequence is that of NAD(P)H-quinone oxidoreductase subunit I, chloroplastic from Triticum aestivum (Wheat).